A 238-amino-acid chain; its full sequence is tRNA (guanine-N(7)-)-methyltransferase (238 aa).

4 residues coordinate S-adenosyl-L-methionine: E68, E93, D120, and D143. Residue D143 is part of the active site. Substrate contacts are provided by residues K147, D179, and 216 to 219 (TKFE).

It belongs to the class I-like SAM-binding methyltransferase superfamily. TrmB family.

The catalysed reaction is guanosine(46) in tRNA + S-adenosyl-L-methionine = N(7)-methylguanosine(46) in tRNA + S-adenosyl-L-homocysteine. Its pathway is tRNA modification; N(7)-methylguanine-tRNA biosynthesis. Catalyzes the formation of N(7)-methylguanine at position 46 (m7G46) in tRNA. This chain is tRNA (guanine-N(7)-)-methyltransferase, found in Shewanella baltica (strain OS155 / ATCC BAA-1091).